A 95-amino-acid chain; its full sequence is Protein TusB (95 aa).

This sequence belongs to the DsrH/TusB family. Heterohexamer, formed by a dimer of trimers. The hexameric TusBCD complex contains 2 copies each of TusB, TusC and TusD. The TusBCD complex interacts with TusE.

It is found in the cytoplasm. Functionally, part of a sulfur-relay system required for 2-thiolation of 5-methylaminomethyl-2-thiouridine (mnm(5)s(2)U) at tRNA wobble positions. The polypeptide is Protein TusB (Escherichia coli O139:H28 (strain E24377A / ETEC)).